We begin with the raw amino-acid sequence, 193 residues long: Cerebellin-1 (193 aa).

A signal peptide spans 1–21 (MLGVLELLLLGAAWLAGPARG). N-linked (GlcNAc...) asparagine glycosylation is present at Asn-23. Positions 34–38 (CLVVC) are essential for interaction with NRXN1 and linker of two C1q trimers into disulfide-linked hexamers. The C1q domain occupies 57-193 (SGSAKVAFSA…TFSGFLVFPL (137 aa)). The tract at residues 62–193 (VAFSAIRSTN…TFSGFLVFPL (132 aa)) is necessary for interaction with CBLN3, and homotrimerization. N-linked (GlcNAc...) asparagine glycosylation occurs at Asn-79. Residues 122–147 (YNRQTIQVSLMLNGWPVISAFAGDQD) are essential for interaction with GRID2.

As to quaternary structure, homohexamer; disulfide-linked homotrimers. The trimers associate via N-terminal cysteine residues to form disulfide-linked hexamers. May form oligomers with CBLN2, CBLN3 AND CBLN4 prior to secretion. Once secreted, does not interact with other CBLN family members. Interacts with GRID1. Interacts with NRXN1 and NRXN2 long (alpha) and short (beta) isoforms produced by alternative promoter usage. Competes with NLGN1 for NRXN1-binding. Weakly interacts with NRXN3 short isoform and not at all with NRXN3 long isoform. Interacts (via C1q domain) with GRID2; GRID2-binding is calcium-independent; CBLN1 hexamers anchor GRID2 N-terminal domain dimers to monomeric NRXN1 isoform beta; promotes synaptogenesis and mediates the D-Serine-dependent long term depression signals and AMPA receptor endocytosis. Interacts with OTOL1. The proteolytic processing to yield cerebellin seems to occur either prior to the secretion by presynaptic neurons and subsequent oligomerization or in some other location after release of the mature protein. Post-translationally, sialoglycoprotein. In the Purkinje cells postsynaptic structures. In the cerebellum, cerebellin is much less abundant than [des-Ser1]-cerebellin.

It is found in the secreted. It localises to the postsynaptic cell membrane. In terms of biological role, required for synapse integrity and synaptic plasticity. During cerebellar synapse formation, essential for the matching and maintenance of pre- and post-synaptic elements at parallel fiber-Purkinje cell synapses, the establishment of the proper pattern of climbing fiber-Purkinje cell innervation, and induction of long-term depression at parallel fiber-Purkinje cell synapses. Plays a role as a synaptic organizer that acts bidirectionally on both pre- and post-synaptic components. On the one hand induces accumulation of synaptic vesicles in the pre-synaptic part by binding with NRXN1 and in other hand induces clustering of GRID2 and its associated proteins at the post-synaptic site through association of GRID2. NRXN1-CBLN1-GRID2 complex directly induces parallel fiber protrusions that encapsulate spines of Purkinje cells leading to accumulation of GRID2 and synaptic vesicles. Required for CBLN3 export from the endoplasmic reticulum and secretion. NRXN1-CBLN1-GRID2 complex mediates the D-Serine-dependent long term depression signals and AMPA receptor endocytosis. Essential for long-term maintenance but not establishment of excitatory synapses. Inhibits the formation and function of inhibitory GABAergic synapses in cerebellar Purkinje cells. Functionally, the cerebellin peptide exerts neuromodulatory functions. Directly stimulates norepinephrine release via the adenylate cyclase/PKA-dependent signaling pathway; and indirectly enhances adrenocortical secretion in vivo, through a paracrine mechanism involving medullary catecholamine release. The polypeptide is Cerebellin-1 (CBLN1) (Homo sapiens (Human)).